A 337-amino-acid polypeptide reads, in one-letter code: Serpentine receptor class delta-50 (337 aa).

7 helical membrane-spanning segments follow: residues 10-30 (VLIL…SQLL), 48-68 (IYLF…FVLQ), 107-127 (VLFH…IIAF), 147-167 (QLVI…LSPN), 202-222 (SSQT…ALVF), 250-270 (GLTL…TYYI), and 280-300 (LFVE…DPLL).

Belongs to the nematode receptor-like protein srd family.

It localises to the membrane. The protein is Serpentine receptor class delta-50 of Caenorhabditis elegans.